The following is a 373-amino-acid chain: uncharacterized protein (373 aa).

In terms of domain architecture, CP-type G spans 14–168 (KKIVNKIIDE…LMDTPGVLEM (155 aa)). 117 to 124 (GYPNVGKS) serves as a coordination point for GTP.

It belongs to the TRAFAC class YlqF/YawG GTPase family.

This is an uncharacterized protein from Methanocaldococcus jannaschii (strain ATCC 43067 / DSM 2661 / JAL-1 / JCM 10045 / NBRC 100440) (Methanococcus jannaschii).